The chain runs to 96 residues: Transcription and mRNA export factor SUS1 (96 aa).

Lys68 participates in a covalent cross-link: Glycyl lysine isopeptide (Lys-Gly) (interchain with G-Cter in ubiquitin).

The protein belongs to the ENY2 family. As to quaternary structure, component of the nuclear pore complex (NPC)-associated TREX-2 complex (transcription and export complex 2), composed of at least SUS1, SAC3, THP1, SEM1, and CDC31. TREX-2 contains 2 SUS1 chains. The TREX-2 complex interacts with the nucleoporin NUP1. Component of the 1.8 MDa SAGA transcription coactivator-HAT complex. SAGA is built of 5 distinct domains with specialized functions. Within the SAGA complex, SUS1, SGF11, SGF73 and UBP8 form an additional subcomplex of SAGA called the DUB module (deubiquitination module). Interacts directly with THP1, SAC3, SGF11, and with the RNA polymerase II.

The protein localises to the nucleus. It localises to the nucleoplasm. It is found in the cytoplasm. Its subcellular location is the P-body. Functionally, involved in mRNA export coupled transcription activation by association with both the TREX-2 and the SAGA complexes. At the promoters, SAGA is required for recruitment of the basal transcription machinery. It influences RNA polymerase II transcriptional activity through different activities such as TBP interaction and promoter selectivity, interaction with transcription activators, and chromatin modification through histone acetylation and deubiquitination. Within the SAGA complex, participates in a subcomplex required for deubiquitination of H2B and for the maintenance of steady-state H3 methylation levels. The TREX-2 complex functions in docking export-competent ribonucleoprotein particles (mRNPs) to the nuclear entrance of the nuclear pore complex (nuclear basket). TREX-2 participates in mRNA export and accurate chromatin positioning in the nucleus by tethering genes to the nuclear periphery. May also be involved in cytoplasmic mRNA decay by interaction with components of P-bodies. The sequence is that of Transcription and mRNA export factor SUS1 from Saccharomyces cerevisiae (strain YJM789) (Baker's yeast).